The chain runs to 361 residues: MRSSMFRCVSRAHYSTSVTEDFINSILARAQEATAKASSNALKLDKMKEGRMQNKRRNGNQNRNSMNNKESRGREGNQGERNMRLKNRSSDSVRANKQQWNKGANTSFVKNPTGNTVVMQPQFKKMQNGKNNLKGDARVEDDLLDVFNSSMEQKPVNFNGTPKSKARFQKKSHILTASKRRKAPQQQLQKVIKRPVSSEYVLEEPTPLSLLEYTPQVFPTKESRLVNFTLDSLKKSNYPIYRSPNLGILKVHDFTLNTPNFGKYTPGSSLIFAKEPQLQNLLIEEDPEDFHRQVTGEYQLLKPYVKKDFEKLTKSKDTVSKLVQNSQVVRLSLQSVVMGSEEKKLVYDVCSGMKPISELQQ.

A mitochondrion-targeting transit peptide spans 1-14 (MRSSMFRCVSRAHY). The segment at 37–99 (ASSNALKLDK…SDSVRANKQQ (63 aa)) is disordered. Basic and acidic residues predominate over residues 43 to 52 (KLDKMKEGRM). A compositionally biased stretch (low complexity) spans 59–68 (GNQNRNSMNN). Residues 69–91 (KESRGREGNQGERNMRLKNRSSD) show a composition bias toward basic and acidic residues.

Belongs to the mitochondrion-specific ribosomal protein mS46 family. As to quaternary structure, component of the mitochondrial small ribosomal subunit (mt-SSU). Mature yeast 74S mitochondrial ribosomes consist of a small (37S) and a large (54S) subunit. The 37S small subunit contains a 15S ribosomal RNA (15S mt-rRNA) and 34 different proteins. The 54S large subunit contains a 21S rRNA (21S mt-rRNA) and 46 different proteins.

The protein resides in the mitochondrion. Its function is as follows. Component of the mitochondrial ribosome (mitoribosome), a dedicated translation machinery responsible for the synthesis of mitochondrial genome-encoded proteins, including at least some of the essential transmembrane subunits of the mitochondrial respiratory chain. The mitoribosomes are attached to the mitochondrial inner membrane and translation products are cotranslationally integrated into the membrane. This chain is Small ribosomal subunit protein mS46 (RSM28), found in Saccharomyces cerevisiae (strain ATCC 204508 / S288c) (Baker's yeast).